Reading from the N-terminus, the 630-residue chain is Tyrosinase (630 aa).

Positions 69, 92, 101, 317, 321, and 360 each coordinate Cu cation. A cross-link (2'-(S-cysteinyl)-histidine (Cys-His)) is located at residues 90 to 92 (CVH).

The protein belongs to the tyrosinase family. It depends on Cu(2+) as a cofactor.

The enzyme catalyses 2 L-dopa + O2 = 2 L-dopaquinone + 2 H2O. The catalysed reaction is L-tyrosine + O2 = L-dopaquinone + H2O. Its function is as follows. This is a copper-containing oxidase that functions in the formation of pigments such as melanins and other polyphenolic compounds. In Aspergillus fumigatus (strain ATCC MYA-4609 / CBS 101355 / FGSC A1100 / Af293) (Neosartorya fumigata), this protein is Tyrosinase (tyr1).